The following is a 1169-amino-acid chain: Chromosome partition protein Smc (1169 aa).

32-39 (PNGCGKSN) contacts ATP. Coiled-coil stretches lie at residues 170-507 (ISKY…ALGE) and 659-1030 (REQQ…FQSL).

Belongs to the SMC family. In terms of assembly, homodimer.

The protein localises to the cytoplasm. Functionally, required for chromosome condensation and partitioning. In Coxiella burnetii (strain RSA 493 / Nine Mile phase I), this protein is Chromosome partition protein Smc.